The primary structure comprises 764 residues: Complement factor B (764 aa).

A signal peptide spans 1–25 (MGSNLSPQLCLMPFILGLLSGGVTT). 3 Sushi domains span residues 35–100 (ESCS…ECRA), 101–160 (IHCP…ICDN), and 163–220 (GYCS…SCQD). Cystine bridges form between Cys37/Cys76, Cys62/Cys98, Cys103/Cys145, Cys131/Cys158, Cys165/Cys205, and Cys191/Cys218. N-linked (GlcNAc...) asparagine glycosylation is found at Asn122 and Asn142. In terms of domain architecture, VWFA spans 270–469 (NIYLVLDGSD…NLEDVFYQMI (200 aa)). Residues Ser278 and Ser280 each contribute to the Mg(2+) site. The N-linked (GlcNAc...) asparagine glycan is linked to Asn285. Thr353 is a Mg(2+) binding site. Asn378 carries an N-linked (GlcNAc...) asparagine glycan. The Peptidase S1 domain occupies 477–757 (LCGMVWEHRK…VLPWLKEKLQ (281 aa)). Intrachain disulfides connect Cys478-Cys596, Cys511-Cys527, Cys599-Cys615, Cys656-Cys682, and Cys695-Cys725. Active-site charge relay system residues include His526 and Asp576. The active-site Charge relay system is the Ser699.

The protein belongs to the peptidase S1 family. In terms of assembly, monomer. Interacts with complement C3b; this interaction is dependent on the presence of Mg(2+). Catalytic component of the C3 convertase of the alternative complement pathway, also named C3bBb, composed of complement factor B Bb and complement C3b. Catalytic component of the C5 convertase of the alternative complement pathway, also named C3bBb3b, composed of complement factor B Bb and additional molecules of complement C3b. Interacts to CFP; this interaction contributes to the stabilization of the active C3-convertase enzyme complex. Requires Mg(2+) as cofactor. Mn(2+) serves as cofactor. Post-translationally, cleaved by CFD following activation of the alternative complement system, generating Ba and Bb chains. Cleavage and activation takes place when CFB is already associated with complement C3b.

It localises to the secreted. The protein resides in the cell surface. The enzyme catalyses Cleavage of Arg-|-Ser bond in complement component C3 alpha-chain to yield C3a and C3b, and Arg-|-Xaa bond in complement component C5 alpha-chain to yield C5a and C5b.. In terms of biological role, precursor of the catalytic component of the C3 and C5 convertase complexes of the alternative pathway of the complement system, a cascade of proteins that leads to phagocytosis and breakdown of pathogens and signaling that strengthens the adaptive immune system. The alternative complement pathway acts as an amplification loop that enhances other complement pathways (classical, lectin and GZMK) by promoting formation of additional C3 and C5 convertases. CFB is cleaved and activated by CFD to generate Ba and Bb chains; Bb chain constituting the catalytic component of the C3 and C5 convertases. Functionally, serine protease component of the complement C3 and C5 convertase complexes of the alternative complement pathway. Following cleavage and activation by factor D (CFD), forms the C3 convertase together with complement C3b. As part of the C3 convertase, cleaves and activates C3 into C3a anaphylatoxin and C3b opsonin, the next components of the complement pathways. When an additional complement C3b molecule binds to the C3 convertase, forms the C5 convertase, which cleaves and activates C5 into C5a anaphylatoxin and C5b component of the membrane attack complex. Involved in proliferation and differentiation of preactivated B-lymphocytes, rapid spreading of peripheral blood monocytes, stimulation of lymphocyte blastogenesis and lysis of erythrocytes. This is Complement factor B (CFB) from Pan troglodytes (Chimpanzee).